The sequence spans 188 residues: Trafficking protein particle complex subunit 5 (188 aa).

Residue serine 10 is modified to Phosphoserine.

It belongs to the TRAPP small subunits family. BET3 subfamily. As to quaternary structure, component of the multisubunit TRAPP (transport protein particle) complex, which includes at least TRAPPC2, TRAPPC2L, TRAPPC3, TRAPPC3L, TRAPPC4, TRAPPC5, TRAPPC8, TRAPPC9, TRAPPC10, TRAPPC11 and TRAPPC12.

It localises to the golgi apparatus. It is found in the cis-Golgi network. The protein localises to the endoplasmic reticulum. Functionally, may play a role in vesicular transport from endoplasmic reticulum to Golgi. The chain is Trafficking protein particle complex subunit 5 (Trappc5) from Mus musculus (Mouse).